The primary structure comprises 299 residues: Plasmodesmata-located protein 5 (299 aa).

The signal sequence occupies residues 1–25 (MIKTKTTSLLCFLLTAVILMNPSSS). Over 26–264 (SPTDNYIYAV…NKDDNGVGKT (239 aa)) the chain is Extracellular. 2 Gnk2-homologous domains span residues 29 to 135 (DNYI…NKSF) and 137 to 237 (GVQD…VGGS). 6 cysteine pairs are disulfide-bonded: Cys-36/Cys-113, Cys-89/Cys-98, Cys-101/Cys-126, Cys-148/Cys-215, Cys-191/Cys-200, and Cys-203/Cys-228. Residues 265–285 (LAIIIGIVTLIILLVVFLAFV) traverse the membrane as a helical segment. Positions 265 to 285 (LAIIIGIVTLIILLVVFLAFV) are necessary and sufficient for plasmodesmal targeting. Residues 286–299 (GKCCRKLQDEKWCK) lie on the Cytoplasmic side of the membrane.

Belongs to the cysteine-rich repeat secretory protein family. Plasmodesmata-located proteins (PDLD) subfamily. As to quaternary structure, monomer. Interacts with PDLP1. (Microbial infection) Interacts with Grapevine fanleaf virus (GFLV) 2B-MP. In terms of tissue distribution, highly expressed in inflorescence nodes and rosette senescent leaves. Mostly expressed in cell wall junctions between leaf epidermal and mesophyl cells, and to a lesser extent at the cross walls between epidermal or cortex cells within the hypocotyl (at protein level). Low vascular expression in seedling and mature leaf, but high expression in senescing leaves (at protein level).

Its subcellular location is the cell membrane. The protein resides in the cell junction. It localises to the plasmodesma. Modulates cell-to-cell trafficking. Has a positive role in innate immunity. Required for systemic acquired resistance (SAR) which is mediated by the signaling molecules azelaic acid (AzA), glycerol-3-phosphate (G3P), and salicylic acid (SA). Negative regulator of plasmodesmata permeability triggered by SA during immune responses, through regulation of callose deposition. Delays the trafficking of Tobacco Mosaic Virus (TMV) movement protein (MP). Required for symplastic signal transport. The protein is Plasmodesmata-located protein 5 of Arabidopsis thaliana (Mouse-ear cress).